Here is a 360-residue protein sequence, read N- to C-terminus: Phosphoserine aminotransferase (360 aa).

Arginine 42 is an L-glutamate binding site. Residues 76 to 77 (AR), tryptophan 102, threonine 152, aspartate 172, and glutamine 195 contribute to the pyridoxal 5'-phosphate site. The residue at position 196 (lysine 196) is an N6-(pyridoxal phosphate)lysine. Residue 237–238 (NT) participates in pyridoxal 5'-phosphate binding.

It belongs to the class-V pyridoxal-phosphate-dependent aminotransferase family. SerC subfamily. In terms of assembly, homodimer. Pyridoxal 5'-phosphate serves as cofactor.

It is found in the cytoplasm. It catalyses the reaction O-phospho-L-serine + 2-oxoglutarate = 3-phosphooxypyruvate + L-glutamate. It carries out the reaction 4-(phosphooxy)-L-threonine + 2-oxoglutarate = (R)-3-hydroxy-2-oxo-4-phosphooxybutanoate + L-glutamate. The protein operates within amino-acid biosynthesis; L-serine biosynthesis; L-serine from 3-phospho-D-glycerate: step 2/3. It functions in the pathway cofactor biosynthesis; pyridoxine 5'-phosphate biosynthesis; pyridoxine 5'-phosphate from D-erythrose 4-phosphate: step 3/5. In terms of biological role, catalyzes the reversible conversion of 3-phosphohydroxypyruvate to phosphoserine and of 3-hydroxy-2-oxo-4-phosphonooxybutanoate to phosphohydroxythreonine. The polypeptide is Phosphoserine aminotransferase (Pasteurella multocida (strain Pm70)).